The following is a 175-amino-acid chain: Sec-independent protein translocase protein TatB (175 aa).

Residues 1 to 21 (MLDLGLTKMALIGVVALVVLG) traverse the membrane as a helical segment. Disordered regions lie at residues 104–132 (GGALEDVGNAGNTSWPGSTPAAGAKRKNW) and 155–175 (SGAARVARHTPATMRRPTRFF).

It belongs to the TatB family. The Tat system comprises two distinct complexes: a TatABC complex, containing multiple copies of TatA, TatB and TatC subunits, and a separate TatA complex, containing only TatA subunits. Substrates initially bind to the TatABC complex, which probably triggers association of the separate TatA complex to form the active translocon.

The protein localises to the cell inner membrane. Its function is as follows. Part of the twin-arginine translocation (Tat) system that transports large folded proteins containing a characteristic twin-arginine motif in their signal peptide across membranes. Together with TatC, TatB is part of a receptor directly interacting with Tat signal peptides. TatB may form an oligomeric binding site that transiently accommodates folded Tat precursor proteins before their translocation. This is Sec-independent protein translocase protein TatB from Paraburkholderia xenovorans (strain LB400).